The primary structure comprises 263 residues: 4-hydroxy-tetrahydrodipicolinate reductase (263 aa).

Residues 7–12, 96–98, and 122–125 each bind NAD(+); these read GFKGRM, GTT, and APNF. The active-site Proton donor/acceptor is the His-152. Residue His-153 coordinates (S)-2,3,4,5-tetrahydrodipicolinate. The active-site Proton donor is the Lys-156. 162 to 163 contacts (S)-2,3,4,5-tetrahydrodipicolinate; that stretch reads GT.

The protein belongs to the DapB family.

The protein localises to the cytoplasm. The catalysed reaction is (S)-2,3,4,5-tetrahydrodipicolinate + NAD(+) + H2O = (2S,4S)-4-hydroxy-2,3,4,5-tetrahydrodipicolinate + NADH + H(+). It catalyses the reaction (S)-2,3,4,5-tetrahydrodipicolinate + NADP(+) + H2O = (2S,4S)-4-hydroxy-2,3,4,5-tetrahydrodipicolinate + NADPH + H(+). The protein operates within amino-acid biosynthesis; L-lysine biosynthesis via DAP pathway; (S)-tetrahydrodipicolinate from L-aspartate: step 4/4. Its function is as follows. Catalyzes the conversion of 4-hydroxy-tetrahydrodipicolinate (HTPA) to tetrahydrodipicolinate. This Listeria monocytogenes serovar 1/2a (strain ATCC BAA-679 / EGD-e) protein is 4-hydroxy-tetrahydrodipicolinate reductase.